A 361-amino-acid polypeptide reads, in one-letter code: Mitogen-activated protein kinase 14 (361 aa).

The Protein kinase domain occupies 25-309 (YQNLTPVGSG…AAEALAHSYF (285 aa)). ATP is bound by residues 31-39 (VGSGAYGSV) and Lys54. Asp151 serves as the catalytic Proton acceptor. The residue at position 181 (Thr181) is a Phosphothreonine. Positions 181-183 (TGY) match the TXY motif. The residue at position 183 (Tyr183) is a Phosphotyrosine.

It belongs to the protein kinase superfamily. CMGC Ser/Thr protein kinase family. MAP kinase subfamily. The cofactor is Mg(2+). Dually phosphorylated on Thr-181 and Tyr-183, which activates the enzyme.

The enzyme catalyses L-seryl-[protein] + ATP = O-phospho-L-seryl-[protein] + ADP + H(+). The catalysed reaction is L-threonyl-[protein] + ATP = O-phospho-L-threonyl-[protein] + ADP + H(+). With respect to regulation, activated by tyrosine and threonine phosphorylation. Functionally, serine/threonine kinase which acts as an essential component of the MAP kinase signal transduction pathway. mapk14a is one of the four p38 MAPKs which play an important role in the cascades of cellular responses evoked by extracellular stimuli such as pro-inflammatory cytokines or physical stress leading to direct activation of transcription factors. Accordingly, p38 MAPKs phosphorylate a broad range of proteins and it has been estimated that they may have approximately 200 to 300 substrates each. Some of the targets are downstream kinases which are activated through phosphorylation and further phosphorylate additional targets. MPK2 is activated by upstream MAPKK/MAPKKK and stimulates MAPKAP kinase 2 to phosphorylate small heat shock proteins. Does not phosphorylate myelin basic protein or MAPKAP kinase 1. The chain is Mitogen-activated protein kinase 14 (mapk14) from Xenopus laevis (African clawed frog).